The chain runs to 156 residues: Neuroactive polyprotein R15 (156 aa).

Residues 1-26 (MDSAGLHINFRLSHVLTVVTCILYIL) form the signal peptide. Positions 27-48 (PPTTTAYSLPAPGKAAFQHQLS) are excised as a propeptide. Residues Cys-74 and Cys-81 are joined by a disulfide bond. Residue Gln-120 is modified to Pyrrolidone carboxylic acid.

In terms of tissue distribution, expressed within the abdominal ganglion in neurons R15, RB(HE), the two L9(G) gill motoneurons, and L40 interneuron, all are parts of autonomic control circuit that contributes to implementing a central command to coordinate autonomic activity with escape locomotion.

The protein localises to the secreted. In terms of biological role, the alpha-1 peptide acts as an osmoregulatory peptide, increasing blood volume, and also modulates the activity of a set of cardiac motor neurons that control heart rate. The polypeptide is Neuroactive polyprotein R15 (Aplysia californica (California sea hare)).